Consider the following 756-residue polypeptide: Catalase-peroxidase (756 aa).

The tryptophyl-tyrosyl-methioninium (Trp-Tyr) (with M-270) cross-link spans W91–Y244. The active-site Proton acceptor is H92. Residues A198–N230 form a disordered region. Residues P214–R223 are compositionally biased toward basic and acidic residues. Positions Y244–M270 form a cross-link, tryptophyl-tyrosyl-methioninium (Tyr-Met) (with W-91). Residue H285 coordinates heme b.

This sequence belongs to the peroxidase family. Peroxidase/catalase subfamily. In terms of assembly, homodimer or homotetramer. It depends on heme b as a cofactor. In terms of processing, formation of the three residue Trp-Tyr-Met cross-link is important for the catalase, but not the peroxidase activity of the enzyme.

It catalyses the reaction H2O2 + AH2 = A + 2 H2O. It carries out the reaction 2 H2O2 = O2 + 2 H2O. Its function is as follows. Bifunctional enzyme with both catalase and broad-spectrum peroxidase activity. This chain is Catalase-peroxidase, found in Pseudomonas syringae pv. syringae (strain B728a).